A 329-amino-acid chain; its full sequence is Segregation and condensation protein B (329 aa).

Disordered regions lie at residues 1–39 (MTTG…GPAD), 252–274 (IVEK…SDPA), and 286–329 (SEAA…PKPE).

It belongs to the ScpB family. In terms of assembly, homodimer. Homodimerization may be required to stabilize the binding of ScpA to the Smc head domains. Component of the Structural Maintenance of Chromosome (SMC) condensin-like complex composed of ScpA, ScpB and the Smc homodimer. ScpA and ScpB bind to the head domain of Smc, the presence of the three proteins is required for the association of the complex with DNA.

The protein resides in the cytoplasm. Functionally, a conditionally essential component of the chromosome segregation machinery. Required for chromosome condensation and partitioning. Important for positioning and anchoring of ParB-parS complexes (ori of replication) in the subpolar region, and of the ter replication site, as well as for segration of the ParB-parS complex and thus chromosome segregation. Probably acts via the formation of a condensin-like complex containing Smc, ScpA and ScpB that pulls DNA away from mid-cell into both cell halves. The polypeptide is Segregation and condensation protein B (Myxococcus xanthus (strain DK1622)).